Consider the following 1305-residue polypeptide: RNA-directed RNA polymerase (1305 aa).

Positions 563–814 constitute a RdRp catalytic domain; sequence IIVGDLEATG…KTLIAPFSVE (252 aa).

It belongs to the reoviridae RNA-directed RNA polymerase family.

The catalysed reaction is RNA(n) + a ribonucleoside 5'-triphosphate = RNA(n+1) + diphosphate. The polypeptide is RNA-directed RNA polymerase (Segment-1) (African horse sickness virus (AHSV)).